The sequence spans 138 residues: ATP synthase epsilon chain (138 aa).

The protein belongs to the ATPase epsilon chain family. In terms of assembly, F-type ATPases have 2 components, CF(1) - the catalytic core - and CF(0) - the membrane proton channel. CF(1) has five subunits: alpha(3), beta(3), gamma(1), delta(1), epsilon(1). CF(0) has three main subunits: a, b and c.

The protein resides in the cell membrane. Its function is as follows. Produces ATP from ADP in the presence of a proton gradient across the membrane. The polypeptide is ATP synthase epsilon chain (atpC) (Buchnera aphidicola subsp. Schizaphis graminum (strain Sg)).